The sequence spans 120 residues: NAD(P)H-quinone oxidoreductase subunit 3 (120 aa).

The next 3 helical transmembrane spans lie at 10–30 (LLVF…ASAL), 64–84 (MFAL…PWAV), and 89–109 (LGLL…VGLV).

The protein belongs to the complex I subunit 3 family. In terms of assembly, NDH-1 can be composed of about 15 different subunits; different subcomplexes with different compositions have been identified which probably have different functions.

The protein resides in the cellular thylakoid membrane. It catalyses the reaction a plastoquinone + NADH + (n+1) H(+)(in) = a plastoquinol + NAD(+) + n H(+)(out). It carries out the reaction a plastoquinone + NADPH + (n+1) H(+)(in) = a plastoquinol + NADP(+) + n H(+)(out). Functionally, NDH-1 shuttles electrons from an unknown electron donor, via FMN and iron-sulfur (Fe-S) centers, to quinones in the respiratory and/or the photosynthetic chain. The immediate electron acceptor for the enzyme in this species is believed to be plastoquinone. Couples the redox reaction to proton translocation, and thus conserves the redox energy in a proton gradient. Cyanobacterial NDH-1 also plays a role in inorganic carbon-concentration. This is NAD(P)H-quinone oxidoreductase subunit 3 from Synechococcus sp. (strain JA-2-3B'a(2-13)) (Cyanobacteria bacterium Yellowstone B-Prime).